We begin with the raw amino-acid sequence, 106 residues long: Iron-sulfur cluster assembly protein CyaY (106 aa).

Belongs to the frataxin family.

Involved in iron-sulfur (Fe-S) cluster assembly. May act as a regulator of Fe-S biogenesis. This Serratia proteamaculans (strain 568) protein is Iron-sulfur cluster assembly protein CyaY.